The chain runs to 178 residues: Nascent polypeptide-associated complex subunit alpha (178 aa).

In terms of domain architecture, NAC-A/B spans 20 to 84 (SKNEKKAREL…AKVDDMNKRI (65 aa)). The segment covering 87–104 (AQAQQEQQEALTKAAADA) has biased composition (low complexity). Residues 87-142 (AQAQQEQQEALTKAAADAETADKSPESITNDLQNASLEDKTVEEDEGEVDETGLDS) are disordered. The segment covering 112-122 (ESITNDLQNAS) has biased composition (polar residues). The span at 127–139 (TVEEDEGEVDETG) shows a compositional bias: acidic residues. The UBA domain maps to 140–178 (LDSKDIEIIVEQTQVSRAKAVKALRAHKGDMVNAIMELS).

The protein belongs to the NAC-alpha family. Part of the nascent polypeptide-associated complex (NAC), consisting of EGD2 and EGD1. NAC associates with ribosomes via EGD1.

The protein resides in the cytoplasm. The protein localises to the nucleus. Functionally, component of the nascent polypeptide-associated complex (NAC), a dynamic component of the ribosomal exit tunnel, protecting the emerging polypeptides from interaction with other cytoplasmic proteins to ensure appropriate nascent protein targeting. The NAC complex also promotes mitochondrial protein import by enhancing productive ribosome interactions with the outer mitochondrial membrane and blocks the inappropriate interaction of ribosomes translating non-secretory nascent polypeptides with translocation sites in the membrane of the endoplasmic reticulum. EGD2 may also be involved in transcription regulation. This chain is Nascent polypeptide-associated complex subunit alpha (EGD2), found in Meyerozyma guilliermondii (strain ATCC 6260 / CBS 566 / DSM 6381 / JCM 1539 / NBRC 10279 / NRRL Y-324) (Yeast).